A 479-amino-acid chain; its full sequence is F-box protein At5g51380 (479 aa).

A disordered region spans residues 1-20 (MTFREKMPTSPKSPLRRRRS). The region spanning 62 to 108 (DRTLSLSDSLLLKILEKLPESQNEDVSLVCKRWLSVQGRRLRSMKVF) is the F-box domain.

The protein is F-box protein At5g51380 of Arabidopsis thaliana (Mouse-ear cress).